The chain runs to 617 residues: uncharacterized protein (617 aa).

The chain crosses the membrane as a helical span at residues A10 to V30. The disordered stretch occupies residues E34–Q58. A compositionally biased stretch (polar residues) spans S43–S53. Residues V60–T86 are a coiled coil. A helical membrane pass occupies residues M473–F493. The span at S511–S529 shows a compositional bias: low complexity. The interval S511–S617 is disordered. Residues S531 to R543 are compositionally biased toward basic and acidic residues. Residues V563–Q584 are compositionally biased toward polar residues. Gly residues predominate over residues G590–F599.

It is found in the membrane. This is an uncharacterized protein from Arabidopsis thaliana (Mouse-ear cress).